A 446-amino-acid polypeptide reads, in one-letter code: MLDGIRDAVRKFLGGNTSYEVAVEEFIKDIQKALISSDVQVKLVFSLTNKIKERLKKETPPSNLERREWFIKIVYDELSALFGGDKEPEVNPKSIPWVIMLVGVQGTGKTTTAGKLAYFYKKRGYKVALVGADVYRPAALEQLQQIGKQINVPVYGEPGSQDAVGIAKRGVEKFLSERYELVIVDTAGRHGYGEEVKLLEEMKDIYEKIKPNEVILVIDASLGQKAYDLAKRFHEASNVGSIIITKMDGTAKGGGALSAVAATGAPIKFIGVGEKIDELEVFNPRRFVARILGMGDLEAIIEKMKAMEDYEGIQKKMGEVMTGKSKLTLRDMYKQIVAVRKMGPLSKILQLIPGMNMMGDIPEDQVKVGEQKMQRWLSIMNSMTYQELDNPSIIDKQRMRRIAMGSGTEVEEVRELIEHFNTVQRTLKMLKRRKKDVEKLFGQMGG.

GTP-binding positions include Gly-103 to Thr-110, Asp-185 to Arg-189, and Thr-245 to Asp-248.

The protein belongs to the GTP-binding SRP family. SRP54 subfamily. As to quaternary structure, part of the signal recognition particle protein translocation system, which is composed of SRP and FtsY. Archaeal SRP consists of a 7S RNA molecule of 300 nucleotides and two protein subunits: SRP54 and SRP19.

The protein resides in the cytoplasm. It carries out the reaction GTP + H2O = GDP + phosphate + H(+). Its function is as follows. Involved in targeting and insertion of nascent membrane proteins into the cytoplasmic membrane. Binds to the hydrophobic signal sequence of the ribosome-nascent chain (RNC) as it emerges from the ribosomes. The SRP-RNC complex is then targeted to the cytoplasmic membrane where it interacts with the SRP receptor FtsY. The sequence is that of Signal recognition particle 54 kDa protein from Metallosphaera sedula (strain ATCC 51363 / DSM 5348 / JCM 9185 / NBRC 15509 / TH2).